The chain runs to 231 residues: MKKWKKKTFIPLLYLTSIVFLPWWVSFLFNKSLESWIINCCNTSKSETFLNDIQEKSILEKFMELEDLVRLNEIIKEYPETHLQKFRIGIHKETIQLIKMHNEDRIHTILHFSTNIICFIILSGYSILSNEELIILNSWVQEFLYNLSDTIKAFSILLLTDLCIGFHSPHGWELMIGSVYKDFGFAHNDQIISGLVSTFPVILDTIFKYWIFRYLNRVSPSLVVIYHSMND.

3 consecutive transmembrane segments (helical) span residues 9-29, 116-136, and 191-211; these read FIPLLYLTSIVFLPWWVSFLF, IICFIILSGYSILSNEELIIL, and IISGLVSTFPVILDTIFKYWI.

This sequence belongs to the CemA family.

The protein localises to the plastid. The protein resides in the chloroplast inner membrane. It carries out the reaction K(+)(in) + H(+)(out) = K(+)(out) + H(+)(in). Contributes to K(+)/H(+) antiport activity by supporting proton efflux to control proton extrusion and homeostasis in chloroplasts in a light-dependent manner to modulate photosynthesis. Prevents excessive induction of non-photochemical quenching (NPQ) under continuous-light conditions. Indirectly promotes efficient inorganic carbon uptake into chloroplasts. The sequence is that of Potassium/proton antiporter CemA from Manihot esculenta (Cassava).